The following is a 381-amino-acid chain: Alkanesulfonate monooxygenase (381 aa).

This sequence belongs to the SsuD family. Homotetramer.

The enzyme catalyses an alkanesulfonate + FMNH2 + O2 = an aldehyde + FMN + sulfite + H2O + 2 H(+). Catalyzes the desulfonation of aliphatic sulfonates. This chain is Alkanesulfonate monooxygenase, found in Escherichia coli O6:K15:H31 (strain 536 / UPEC).